The chain runs to 470 residues: tRNA modification GTPase MnmE (470 aa).

Arg-30, Glu-92, and Arg-132 together coordinate (6S)-5-formyl-5,6,7,8-tetrahydrofolate. A TrmE-type G domain is found at 227–393 (GLQVALVGRP…LIKAVLKTCG (167 aa)). Asn-237 contacts K(+). Residues 237–242 (NVGKSS), 256–262 (TDLPGTT), 281–284 (DTAG), and 342–345 (NKAD) each bind GTP. Ser-241 serves as a coordination point for Mg(2+). The K(+) site is built by Thr-256, Leu-258, and Thr-261. A Mg(2+)-binding site is contributed by Thr-262. Lys-470 is a (6S)-5-formyl-5,6,7,8-tetrahydrofolate binding site.

This sequence belongs to the TRAFAC class TrmE-Era-EngA-EngB-Septin-like GTPase superfamily. TrmE GTPase family. As to quaternary structure, homodimer. Heterotetramer of two MnmE and two MnmG subunits. K(+) serves as cofactor.

It localises to the cytoplasm. Its function is as follows. Exhibits a very high intrinsic GTPase hydrolysis rate. Involved in the addition of a carboxymethylaminomethyl (cmnm) group at the wobble position (U34) of certain tRNAs, forming tRNA-cmnm(5)s(2)U34. The sequence is that of tRNA modification GTPase MnmE from Prochlorococcus marinus (strain MIT 9313).